A 347-amino-acid polypeptide reads, in one-letter code: Histidinol-phosphate aminotransferase (347 aa).

Lysine 209 carries the N6-(pyridoxal phosphate)lysine modification.

Belongs to the class-II pyridoxal-phosphate-dependent aminotransferase family. Histidinol-phosphate aminotransferase subfamily. As to quaternary structure, homodimer. Pyridoxal 5'-phosphate serves as cofactor.

The enzyme catalyses L-histidinol phosphate + 2-oxoglutarate = 3-(imidazol-4-yl)-2-oxopropyl phosphate + L-glutamate. Its pathway is amino-acid biosynthesis; L-histidine biosynthesis; L-histidine from 5-phospho-alpha-D-ribose 1-diphosphate: step 7/9. The chain is Histidinol-phosphate aminotransferase from Syntrophotalea carbinolica (strain DSM 2380 / NBRC 103641 / GraBd1) (Pelobacter carbinolicus).